The chain runs to 693 residues: Homeobox protein caupolican (693 aa).

6 disordered regions span residues threonine 20–glycine 104, asparagine 288–glutamine 331, alanine 387–isoleucine 453, tyrosine 480–methionine 538, methionine 561–serine 627, and tyrosine 648–serine 693. Residues alanine 41 to leucine 59 are compositionally biased toward low complexity. A DNA-binding region (homeobox; TALE-type) is located at residues leucine 226 to asparagine 288. Composition is skewed to basic and acidic residues over residues asparagine 288 to threonine 298 and aspartate 308 to aspartate 317. Low complexity-rich tracts occupy residues histidine 397–histidine 419 and glutamine 493–glutamine 515. Over residues glutamine 516 to histidine 527 the composition is skewed to basic residues. Over residues serine 609–serine 627 the composition is skewed to low complexity. Basic residues predominate over residues glycine 651–glycine 675.

Belongs to the TALE/IRO homeobox family.

The protein localises to the nucleus. Its function is as follows. Controls proneural and vein forming genes. Positive transcriptional controller of ac-sc (achaete-scute). May act as an activator that interacts with the transcriptional complex assembled on the ac and sc promoters and participates in transcription initiation. This Drosophila melanogaster (Fruit fly) protein is Homeobox protein caupolican (caup).